The primary structure comprises 702 residues: Acetylcholinesterase (702 aa).

The N-terminal stretch at Met-1–Cys-36 is a signal peptide. The tract at residues His-107 to Val-134 is disordered. Residue Asn-187 is glycosylated (N-linked (GlcNAc...) asparagine). Cys-195 and Cys-222 are joined by a disulfide. The Acyl-ester intermediate role is filled by Ser-327. Cysteines 381 and 394 form a disulfide. Residues Glu-453 and His-567 each act as charge relay system in the active site. A disulfide bond links Cys-529 and Cys-650. A glycan (N-linked (GlcNAc...) asparagine) is linked at Asn-637.

The protein belongs to the type-B carboxylesterase/lipase family.

It is found in the synapse. The protein localises to the secreted. Its subcellular location is the cell membrane. The catalysed reaction is acetylcholine + H2O = choline + acetate + H(+). Rapidly hydrolyzes choline released into the synapse. In Culex pipiens (House mosquito), this protein is Acetylcholinesterase (ACHE1).